A 639-amino-acid polypeptide reads, in one-letter code: 1-deoxy-D-xylulose-5-phosphate synthase 1 (639 aa).

Residues H79 and 120–122 (AHS) contribute to the thiamine diphosphate site. D155 contributes to the Mg(2+) binding site. Thiamine diphosphate is bound by residues 156–157 (GA), N184, Y293, and E373. N184 contributes to the Mg(2+) binding site.

The protein belongs to the transketolase family. DXPS subfamily. In terms of assembly, homodimer. The cofactor is Mg(2+). Thiamine diphosphate is required as a cofactor.

The enzyme catalyses D-glyceraldehyde 3-phosphate + pyruvate + H(+) = 1-deoxy-D-xylulose 5-phosphate + CO2. It functions in the pathway metabolic intermediate biosynthesis; 1-deoxy-D-xylulose 5-phosphate biosynthesis; 1-deoxy-D-xylulose 5-phosphate from D-glyceraldehyde 3-phosphate and pyruvate: step 1/1. In terms of biological role, catalyzes the acyloin condensation reaction between C atoms 2 and 3 of pyruvate and glyceraldehyde 3-phosphate to yield 1-deoxy-D-xylulose-5-phosphate (DXP). The protein is 1-deoxy-D-xylulose-5-phosphate synthase 1 of Jannaschia sp. (strain CCS1).